Here is a 260-residue protein sequence, read N- to C-terminus: Snake venom serine proteinase 4a (260 aa).

An N-terminal signal peptide occupies residues 1–18 (MVLIRVLANLLILQLSYA). Residues 19-24 (QMSSEL) constitute a propeptide that is removed on maturation. One can recognise a Peptidase S1 domain in the interval 25–251 (VTGGDECNRN…HLDWIQRIIA (227 aa)). 6 disulfides stabilise this stretch: C31–C163, C50–C66, C98–C258, C142–C212, C174–C191, and C202–C227. H65 acts as the Charge relay system in catalysis. Residue N103 is glycosylated (N-linked (GlcNAc...) asparagine). D110 acts as the Charge relay system in catalysis. The active-site Charge relay system is S206.

It belongs to the peptidase S1 family. Snake venom subfamily. In terms of assembly, monomer. As to expression, expressed by the venom gland.

It is found in the secreted. Functionally, snake venom serine protease that may act in the hemostasis system of the prey. This Crotalus adamanteus (Eastern diamondback rattlesnake) protein is Snake venom serine proteinase 4a.